Here is a 341-residue protein sequence, read N- to C-terminus: UPF0284 protein Ta0078 (341 aa).

This sequence belongs to the UPF0284 family.

The sequence is that of UPF0284 protein Ta0078 from Thermoplasma acidophilum (strain ATCC 25905 / DSM 1728 / JCM 9062 / NBRC 15155 / AMRC-C165).